A 443-amino-acid polypeptide reads, in one-letter code: ATP-dependent protease ATPase subunit HslU (443 aa).

ATP contacts are provided by residues I18 and 60–65 (GVGKTE). The tract at residues 141–165 (DQWGQNEENDTDSSTRQSFRKKLRE) is disordered. ATP is bound by residues D256, E321, and R393.

It belongs to the ClpX chaperone family. HslU subfamily. In terms of assembly, a double ring-shaped homohexamer of HslV is capped on each side by a ring-shaped HslU homohexamer. The assembly of the HslU/HslV complex is dependent on binding of ATP.

It localises to the cytoplasm. ATPase subunit of a proteasome-like degradation complex; this subunit has chaperone activity. The binding of ATP and its subsequent hydrolysis by HslU are essential for unfolding of protein substrates subsequently hydrolyzed by HslV. HslU recognizes the N-terminal part of its protein substrates and unfolds these before they are guided to HslV for hydrolysis. The sequence is that of ATP-dependent protease ATPase subunit HslU from Photobacterium profundum (strain SS9).